The following is a 464-amino-acid chain: ATP synthase subunit beta 2 (464 aa).

147–154 (GGAGVGKT) contacts ATP.

This sequence belongs to the ATPase alpha/beta chains family. F-type ATPases have 2 components, CF(1) - the catalytic core - and CF(0) - the membrane proton channel. CF(1) has five subunits: alpha(3), beta(3), gamma(1), delta(1), epsilon(1). CF(0) has four main subunits: a(1), b(1), b'(1) and c(9-12).

The protein resides in the cell inner membrane. The enzyme catalyses ATP + H2O + 4 H(+)(in) = ADP + phosphate + 5 H(+)(out). Functionally, produces ATP from ADP in the presence of a proton gradient across the membrane. The catalytic sites are hosted primarily by the beta subunits. The chain is ATP synthase subunit beta 2 from Cereibacter sphaeroides (strain ATCC 17029 / ATH 2.4.9) (Rhodobacter sphaeroides).